We begin with the raw amino-acid sequence, 410 residues long: Neuroserpin (410 aa).

Residues 1–16 (MAYLGLLSLVALQSLV) form the signal peptide. A Phosphoserine modification is found at serine 83. N-linked (GlcNAc...) asparagine glycosylation is found at asparagine 157, asparagine 321, and asparagine 401. Serine 403 carries O-linked (Xyl...) (chondroitin sulfate) serine glycosylation.

This sequence belongs to the serpin family. In terms of tissue distribution, detected in adult pituitary and adrenal gland.

Its subcellular location is the secreted. It is found in the cytoplasmic vesicle. The protein localises to the secretory vesicle lumen. The protein resides in the perikaryon. Functionally, serine protease inhibitor that inhibits plasminogen activators and plasmin but not thrombin. May be involved in the formation or reorganization of synaptic connections as well as for synaptic plasticity in the adult nervous system. May protect neurons from cell damage by tissue-type plasminogen activator. The chain is Neuroserpin (Serpini1) from Rattus norvegicus (Rat).